Reading from the N-terminus, the 254-residue chain is Hydroxyethylthiazole kinase (254 aa).

Met-40 is a binding site for substrate. ATP-binding residues include Arg-116 and Ser-162. Gly-189 serves as a coordination point for substrate.

Belongs to the Thz kinase family. Mg(2+) is required as a cofactor.

It carries out the reaction 5-(2-hydroxyethyl)-4-methylthiazole + ATP = 4-methyl-5-(2-phosphooxyethyl)-thiazole + ADP + H(+). It functions in the pathway cofactor biosynthesis; thiamine diphosphate biosynthesis; 4-methyl-5-(2-phosphoethyl)-thiazole from 5-(2-hydroxyethyl)-4-methylthiazole: step 1/1. Catalyzes the phosphorylation of the hydroxyl group of 4-methyl-5-beta-hydroxyethylthiazole (THZ). This is Hydroxyethylthiazole kinase from Limosilactobacillus fermentum (strain NBRC 3956 / LMG 18251) (Lactobacillus fermentum).